A 545-amino-acid chain; its full sequence is Thermosome subunit alpha (545 aa).

It belongs to the TCP-1 chaperonin family. In terms of assembly, forms a Heterooligomeric complex of two stacked eight-membered rings.

Its function is as follows. Molecular chaperone; binds unfolded polypeptides in vitro, and has a weak ATPase activity. The protein is Thermosome subunit alpha (thsA) of Archaeoglobus fulgidus (strain ATCC 49558 / DSM 4304 / JCM 9628 / NBRC 100126 / VC-16).